A 693-amino-acid polypeptide reads, in one-letter code: Kinesin-like protein KIFC1 (693 aa).

2 disordered regions span residues 1–24 (MRGRGSRDTGTQSAAFASRPVRTT) and 48–156 (VKSS…KRPA). 2 stretches are compositionally biased toward low complexity: residues 49-59 (KSSSRLPLPGS) and 127-138 (QKPAPAAPAQKP). A phosphoserine mark is found at Ser-52 and Ser-59. A coiled-coil region spans residues 165–334 (DLHEELKQYR…QELKGNIRVF (170 aa)). In terms of domain architecture, Kinesin motor spans 330–683 (NIRVFCRVRP…LRFASKVNQC (354 aa)). Phosphothreonine is present on Thr-379. Residue 430 to 437 (GQTGSGKT) participates in ATP binding.

It belongs to the TRAFAC class myosin-kinesin ATPase superfamily. Kinesin family. NCD subfamily. In terms of assembly, binds NUBP1 and NUBP2. Interacts with PPP1R42.

The protein localises to the nucleus. The protein resides in the cytoplasm. Its subcellular location is the cytoskeleton. It localises to the microtubule organizing center. It is found in the centrosome. The protein localises to the spindle. The protein resides in the early endosome. In terms of biological role, minus end-directed microtubule-dependent motor required for bipolar spindle formation. May contribute to movement of early endocytic vesicles. Regulates cilium formation and structure. This chain is Kinesin-like protein KIFC1, found in Rattus norvegicus (Rat).